Reading from the N-terminus, the 660-residue chain is RalBP1-associated Eps domain-containing protein 2 (660 aa).

Residues 34–147 (EQQCYSELFA…RFMMSKNDGE (114 aa)) enclose the EH 1 domain. The interval 169-208 (EKNSFKRMDDEDKQQETQSPTMSPLASPPSSPPHYQRVPL) is disordered. Residue Ser254 is modified to Phosphoserine. The EH 2 domain maps to 282–373 (QREYYVNQFR…LQPEYLQAAF (92 aa)). Residues 315–350 (LSIPELSYIWELSDADCDGALTLPEFCAAFHLIVAR) form the EF-hand domain. 4 residues coordinate Ca(2+): Asp328, Asp330, Asp332, and Glu339. Residues 433–616 (NEALPKDVSE…KQKKAIQTAI (184 aa)) form a disordered region. A Phosphothreonine modification is found at Thr479. Residue Ser493 is modified to Phosphoserine. Residues 512-523 (LPPPPALPPRPC) show a composition bias toward pro residues. Residues 514-660 (PPPALPPRPC…LEQLRPVTVL (147 aa)) form an interaction with RALBP1 region. Residues 561 to 660 (PPSKPIRRKF…LEQLRPVTVL (100 aa)) form an interaction with ASAP1 region. Over residues 582-594 (PSTAASGPASAAT) the composition is skewed to low complexity. Residues 601–657 (VQKQSSKQKKAIQTAIRKNKEANAVLARLNSELQQQLKEVHQERIALENQLEQLRPV) adopt a coiled-coil conformation.

In terms of assembly, interacts with EPN1; the interaction is direct. Interacts with EPS15; the interaction is direct. Interacts with EPS15L1. Interacts with RALBP1; can form a ternary complex with activated Ral (RALA or RALB). Interacts with ASAP1; the interaction is direct and this complex can bind paxillin. Also forms a ternary complex with RALBP1 and ASAP1. Interacts with GRB2. Tyrosine-phosphorylated upon stimulation of cells with EGF. Phosphorylation on Tyr-residues induces its association with the EGF receptor probably indirectly through an adapter like GRB2. In terms of tissue distribution, expressed at high levels in the cerebrum, cerebellum, lung, kidney, and testis. Weakly expressed in the kidney. Isoform 2 is down-regulated during progression of prostate cancer.

It is found in the cytoplasm. Involved in ligand-dependent receptor mediated endocytosis of the EGF and insulin receptors as part of the Ral signaling pathway. By controlling growth factor receptors endocytosis may regulate cell survival. Through ASAP1 may regulate cell adhesion and migration. This Homo sapiens (Human) protein is RalBP1-associated Eps domain-containing protein 2 (REPS2).